A 239-amino-acid polypeptide reads, in one-letter code: Urease accessory protein UreE (239 aa).

The disordered stretch occupies residues 185–239 (VASPLDEPHGSGLHIHGIHSHGDGHSHSHDSHSHSHDSDHGHSHSHGDHDHDHKH). Residues 204-239 (SHGDGHSHSHDSHSHSHDSDHGHSHSHGDHDHDHKH) show a composition bias toward basic and acidic residues.

Belongs to the UreE family.

It localises to the cytoplasm. Its function is as follows. Involved in urease metallocenter assembly. Binds nickel. Probably functions as a nickel donor during metallocenter assembly. The protein is Urease accessory protein UreE of Yersinia frederiksenii.